The sequence spans 633 residues: Extracellular metalloproteinase 3 (633 aa).

The N-terminal stretch at 1 to 18 (MHGLLLAGLLALPMNVLA) is a signal peptide. Positions 19–246 (HPAEQHASNV…VHNVVDYVAS (228 aa)) are excised as a propeptide. The N-linked (GlcNAc...) asparagine glycan is linked to Asn410. His429 lines the Zn(2+) pocket. Residue Glu430 is part of the active site. A Zn(2+)-binding site is contributed by His433. 2 N-linked (GlcNAc...) asparagine glycosylation sites follow: Asn480 and Asn622.

It belongs to the peptidase M36 family. The cofactor is Zn(2+).

The protein resides in the secreted. Its function is as follows. Secreted metalloproteinase probably acting as a virulence factor. This Trichophyton equinum (Horse ringworm fungus) protein is Extracellular metalloproteinase 3 (MEP3).